Consider the following 240-residue polypeptide: Octanoyltransferase (240 aa).

Residues 1–22 are disordered; it reads MGTTGTNDGATTPPANTSTPAV. Low complexity predominate over residues 10–21; that stretch reads ATTPPANTSTPA. The BPL/LPL catalytic domain occupies 51–236; that stretch reads EKIPDTILLL…NLVDALNGDL (186 aa). Substrate-binding positions include 89–96, 166–168, and 179–181; these read RGGRITWH, AIG, and GVA. Catalysis depends on Cys-197, which acts as the Acyl-thioester intermediate.

It belongs to the LipB family.

It is found in the cytoplasm. The enzyme catalyses octanoyl-[ACP] + L-lysyl-[protein] = N(6)-octanoyl-L-lysyl-[protein] + holo-[ACP] + H(+). It functions in the pathway protein modification; protein lipoylation via endogenous pathway; protein N(6)-(lipoyl)lysine from octanoyl-[acyl-carrier-protein]: step 1/2. Functionally, catalyzes the transfer of endogenously produced octanoic acid from octanoyl-acyl-carrier-protein onto the lipoyl domains of lipoate-dependent enzymes. Lipoyl-ACP can also act as a substrate although octanoyl-ACP is likely to be the physiological substrate. This is Octanoyltransferase from Corynebacterium jeikeium (strain K411).